A 259-amino-acid chain; its full sequence is Ribonuclease HII (259 aa).

One can recognise an RNase H type-2 domain in the interval 70 to 258 (TLIAGIDEVG…VKSLVLGKKE (189 aa)). A divalent metal cation is bound by residues aspartate 76, glutamate 77, and aspartate 168.

The protein belongs to the RNase HII family. Mn(2+) serves as cofactor. The cofactor is Mg(2+).

The protein resides in the cytoplasm. The enzyme catalyses Endonucleolytic cleavage to 5'-phosphomonoester.. In terms of biological role, endonuclease that specifically degrades the RNA of RNA-DNA hybrids. This Streptococcus pneumoniae (strain Taiwan19F-14) protein is Ribonuclease HII.